The chain runs to 295 residues: Bifunctional protein FolD (295 aa).

NADP(+) contacts are provided by residues 167–169 (GRS), Ser-192, and Ile-233.

Belongs to the tetrahydrofolate dehydrogenase/cyclohydrolase family. Homodimer.

The enzyme catalyses (6R)-5,10-methylene-5,6,7,8-tetrahydrofolate + NADP(+) = (6R)-5,10-methenyltetrahydrofolate + NADPH. It catalyses the reaction (6R)-5,10-methenyltetrahydrofolate + H2O = (6R)-10-formyltetrahydrofolate + H(+). The protein operates within one-carbon metabolism; tetrahydrofolate interconversion. Functionally, catalyzes the oxidation of 5,10-methylenetetrahydrofolate to 5,10-methenyltetrahydrofolate and then the hydrolysis of 5,10-methenyltetrahydrofolate to 10-formyltetrahydrofolate. This chain is Bifunctional protein FolD, found in Paramagnetospirillum magneticum (strain ATCC 700264 / AMB-1) (Magnetospirillum magneticum).